Consider the following 233-residue polypeptide: ATP synthase subunit C lysine N-methyltransferase (233 aa).

Position 1 is an N-acetylmethionine (methionine 1). Residues 38 to 58 form a helical membrane-spanning segment; sequence FLLTGLVGGTLVAVYAVATPF. The tract at residues 56–90 is required for mitochondrial location; it reads TPFVTPALRKVCLPFVPATTKQIENVVKMLRCRRG.

The protein belongs to the ANT/ATPSC lysine N-methyltransferase family. As to expression, ubiquitously expressed.

The protein localises to the mitochondrion membrane. It catalyses the reaction L-lysyl-[protein] + 3 S-adenosyl-L-methionine = N(6),N(6),N(6)-trimethyl-L-lysyl-[protein] + 3 S-adenosyl-L-homocysteine + 3 H(+). Mitochondrial protein-lysine N-methyltransferase that trimethylates ATP synthase subunit C, ATP5MC1 and ATP5MC2. Trimethylation is required for proper incorporation of the C subunit into the ATP synthase complex and mitochondrial respiration. Promotes chronic pain. Involved in persistent inflammatory and neuropathic pain: methyltransferase activity in the mitochondria of sensory neurons promotes chronic pain via a pathway that depends on the production of reactive oxygen species (ROS) and on the engagement of spinal cord microglia. The protein is ATP synthase subunit C lysine N-methyltransferase of Homo sapiens (Human).